The chain runs to 104 residues: Photosystem II reaction center Psb28 protein (104 aa).

This sequence belongs to the Psb28 family. In terms of assembly, part of the photosystem II complex.

The protein localises to the cellular thylakoid membrane. The chain is Photosystem II reaction center Psb28 protein from Synechococcus sp. (strain JA-3-3Ab) (Cyanobacteria bacterium Yellowstone A-Prime).